Consider the following 526-residue polypeptide: Exodeoxyribonuclease 7 large subunit (526 aa).

The interval 496–526 (GAMTTEGGTPPAGAKKRSAKPADPTKQGSLF) is disordered.

This sequence belongs to the XseA family. As to quaternary structure, heterooligomer composed of large and small subunits.

It is found in the cytoplasm. It carries out the reaction Exonucleolytic cleavage in either 5'- to 3'- or 3'- to 5'-direction to yield nucleoside 5'-phosphates.. Functionally, bidirectionally degrades single-stranded DNA into large acid-insoluble oligonucleotides, which are then degraded further into small acid-soluble oligonucleotides. The polypeptide is Exodeoxyribonuclease 7 large subunit (Rhizobium etli (strain CIAT 652)).